The primary structure comprises 345 residues: MDVLSAVLLALLLIGANAFFVGAEFALISARRDRLEALAEQGKATAVTVIRAGEQLPAMLTGAQLGVTVSSILLGRVGEPAVVKLLQLSFGLSGVPPALLHTLSLAIVVALHVLLGEMVPKNIALAGPERTAMLLVPPYLVYVRLARPFIAFYNNCANAILRLVGVQPKDELDIAVSTAELSEMIAESLSEGLLDHEEHTRLTRALRIRTRLVADVAVPLVNIRAVQVSAVGSGPTIGGVEQALAQTGYSRFPVVDRGGRFIGYLHIKDVLTLGDNPQTVIDLAVVRPLPRVPQSLPLADALSRMRRINSHLALVTADNGSVVGMVALEDVVEDLVGTMRDGTHR.

In terms of domain architecture, CNNM transmembrane spans 1–198 (MDVLSAVLLA…LSEGLLDHEE (198 aa)). 2 helical membrane passes run 3–23 (VLSA…FVGA) and 95–115 (VPPA…HVLL). CBS domains follow at residues 217–280 (AVPL…PQTV) and 285–342 (VVRP…MRDG). Residues 312-332 (LALVTADNGSVVGMVALEDVV) traverse the membrane as a helical segment.

Belongs to the TerC family.

It localises to the cell membrane. This is an uncharacterized protein from Mycobacterium tuberculosis (strain ATCC 25618 / H37Rv).